The following is a 109-amino-acid chain: ATPase inhibitor, mitochondrial (109 aa).

A mitochondrion-targeting transit peptide spans 1 to 25 (MAATALAARTRQAVWSVWAMQGRGF). Residues 26–52 (GSESGDNVRSSAGAVRDAGGAFGKREQ) are disordered. Residues 26 to 52 (GSESGDNVRSSAGAVRDAGGAFGKREQ) are N-terminal inhibitory region. Residues 69–109 (ALKKHHENEISHHAKEIERLQKEIERHKQSIKKLKQSEDDD) adopt a coiled-coil conformation. An antiparallel alpha-helical coiled coil region region spans residues 74 to 106 (HENEISHHAKEIERLQKEIERHKQSIKKLKQSE). Residue Lys103 is modified to N6-succinyllysine.

The protein belongs to the ATPase inhibitor family. In terms of assembly, homodimer; represents the active form and is present at a pH value below 6.5. Homotetramer; represents the inactive form and is present at a pH value above 7.0.

Its subcellular location is the mitochondrion. Functionally, endogenous F(1)F(o)-ATPase inhibitor limiting ATP depletion when the mitochondrial membrane potential falls below a threshold and the F(1)F(o)-ATP synthase starts hydrolyzing ATP to pump protons out of the mitochondrial matrix. Required to avoid the consumption of cellular ATP when the F(1)F(o)-ATP synthase enzyme acts as an ATP hydrolase. Indirectly acts as a regulator of heme synthesis in erythroid tissues: regulates heme synthesis by modulating the mitochondrial pH and redox potential, allowing FECH to efficiently catalyze the incorporation of iron into protoporphyrin IX to produce heme. The chain is ATPase inhibitor, mitochondrial from Bos taurus (Bovine).